The following is a 526-amino-acid chain: ATP-dependent RNA helicase dbp8 (526 aa).

Residues 1–77 are disordered; sequence MTSPVPSEPV…DAKPAAPAGQ (77 aa). The segment covering 17-31 has biased composition (polar residues); that stretch reads SSSGSEVEPSKTSTR. A Q motif motif is present at residues 96–124; sequence SSFAALNVAPWLVGSLTTMAVRKPTAIQK. The Helicase ATP-binding domain occupies 127-306; it reads IPEILKGRDC…NMPRSANKPP (180 aa). Residue 140–147 participates in ATP binding; the sequence is SRTGSGKT. Residues 249–252 carry the DEAD box motif; sequence DEAD. Positions 338-485 constitute a Helicase C-terminal domain; it reads AFLHVLLSTE…EWSEEGVSIE (148 aa).

Belongs to the DEAD box helicase family. DDX49/DBP8 subfamily.

It localises to the nucleus. The protein localises to the nucleolus. It carries out the reaction ATP + H2O = ADP + phosphate + H(+). Its function is as follows. ATP-binding RNA helicase involved in 40S ribosomal subunit biogenesis and is required for the normal formation of 18S rRNAs through pre-rRNA processing at A0, A1 and A2 sites. Required for vegetative growth. The chain is ATP-dependent RNA helicase dbp8 (dbp8) from Aspergillus fumigatus (strain ATCC MYA-4609 / CBS 101355 / FGSC A1100 / Af293) (Neosartorya fumigata).